The sequence spans 251 residues: D-aminoacyl-tRNA deacylase (251 aa).

It belongs to the DtdA deacylase family. In terms of assembly, monomer. Requires Zn(2+) as cofactor.

It catalyses the reaction a D-aminoacyl-tRNA + H2O = a tRNA + a D-alpha-amino acid + H(+). The catalysed reaction is glycyl-tRNA(Ala) + H2O = tRNA(Ala) + glycine + H(+). D-aminoacyl-tRNA deacylase with broad substrate specificity. By recycling D-aminoacyl-tRNA to D-amino acids and free tRNA molecules, this enzyme counteracts the toxicity associated with the formation of D-aminoacyl-tRNA entities in vivo. In Pyrobaculum aerophilum (strain ATCC 51768 / DSM 7523 / JCM 9630 / CIP 104966 / NBRC 100827 / IM2), this protein is D-aminoacyl-tRNA deacylase.